We begin with the raw amino-acid sequence, 95 residues long: Aspartyl/glutamyl-tRNA(Asn/Gln) amidotransferase subunit C (95 aa).

The segment covering 55-67 (ALERRNVTREDQV) has biased composition (basic and acidic residues). Positions 55–83 (ALERRNVTREDQVHNSLTNDKALENAPET) are disordered.

The protein belongs to the GatC family. As to quaternary structure, heterotrimer of A, B and C subunits.

The catalysed reaction is L-glutamyl-tRNA(Gln) + L-glutamine + ATP + H2O = L-glutaminyl-tRNA(Gln) + L-glutamate + ADP + phosphate + H(+). The enzyme catalyses L-aspartyl-tRNA(Asn) + L-glutamine + ATP + H2O = L-asparaginyl-tRNA(Asn) + L-glutamate + ADP + phosphate + 2 H(+). Functionally, allows the formation of correctly charged Asn-tRNA(Asn) or Gln-tRNA(Gln) through the transamidation of misacylated Asp-tRNA(Asn) or Glu-tRNA(Gln) in organisms which lack either or both of asparaginyl-tRNA or glutaminyl-tRNA synthetases. The reaction takes place in the presence of glutamine and ATP through an activated phospho-Asp-tRNA(Asn) or phospho-Glu-tRNA(Gln). The sequence is that of Aspartyl/glutamyl-tRNA(Asn/Gln) amidotransferase subunit C from Natranaerobius thermophilus (strain ATCC BAA-1301 / DSM 18059 / JW/NM-WN-LF).